A 213-amino-acid chain; its full sequence is Redox-sensing transcriptional repressor Rex (213 aa).

The segment at residues 18–57 (LYYRIFKRFHAEKIERANSKQIAEAIGIDSATVRRDFSYF) is a DNA-binding region (H-T-H motif). 92 to 97 (GIGNMG) is an NAD(+) binding site.

This sequence belongs to the transcriptional regulatory Rex family. In terms of assembly, homodimer.

The protein resides in the cytoplasm. Modulates transcription in response to changes in cellular NADH/NAD(+) redox state. Binds to the promoter of the aldehyde-alcohol dehydrogenase adhE gene. Functions as a redox-dependent repressor of adhE expression. The polypeptide is Redox-sensing transcriptional repressor Rex (Streptococcus pneumoniae (strain ATCC BAA-255 / R6)).